The sequence spans 486 residues: UDP-N-acetylmuramate--L-alanine ligase (486 aa).

Position 129–135 (129–135) interacts with ATP; that stretch reads GTHGKTT.

This sequence belongs to the MurCDEF family.

It localises to the cytoplasm. The enzyme catalyses UDP-N-acetyl-alpha-D-muramate + L-alanine + ATP = UDP-N-acetyl-alpha-D-muramoyl-L-alanine + ADP + phosphate + H(+). Its pathway is cell wall biogenesis; peptidoglycan biosynthesis. Functionally, cell wall formation. The sequence is that of UDP-N-acetylmuramate--L-alanine ligase from Vibrio atlanticus (strain LGP32) (Vibrio splendidus (strain Mel32)).